A 287-amino-acid polypeptide reads, in one-letter code: 2-dehydro-3-deoxyphosphooctonate aldolase (287 aa).

It belongs to the KdsA family.

It localises to the cytoplasm. The enzyme catalyses D-arabinose 5-phosphate + phosphoenolpyruvate + H2O = 3-deoxy-alpha-D-manno-2-octulosonate-8-phosphate + phosphate. Its pathway is carbohydrate biosynthesis; 3-deoxy-D-manno-octulosonate biosynthesis; 3-deoxy-D-manno-octulosonate from D-ribulose 5-phosphate: step 2/3. The protein operates within bacterial outer membrane biogenesis; lipopolysaccharide biosynthesis. The protein is 2-dehydro-3-deoxyphosphooctonate aldolase of Nitrobacter winogradskyi (strain ATCC 25391 / DSM 10237 / CIP 104748 / NCIMB 11846 / Nb-255).